Here is a 182-residue protein sequence, read N- to C-terminus: Ribosome-recycling factor (182 aa).

It belongs to the RRF family.

It is found in the cytoplasm. Responsible for the release of ribosomes from messenger RNA at the termination of protein biosynthesis. May increase the efficiency of translation by recycling ribosomes from one round of translation to another. This chain is Ribosome-recycling factor, found in Thermosynechococcus vestitus (strain NIES-2133 / IAM M-273 / BP-1).